A 479-amino-acid chain; its full sequence is Muscarinic acetylcholine receptor M4 (479 aa).

The Extracellular segment spans residues 1-30; it reads MANFTPVNGSSANQSVRLVTTAHNHLETVE. N-linked (GlcNAc...) asparagine glycans are attached at residues N8 and N13. Residues 31–53 form a helical membrane-spanning segment; it reads MVFIATVTGSLSLVTVVGNILVM. The Cytoplasmic portion of the chain corresponds to 54 to 67; sequence LSIKVNRQLQTVNN. A helical transmembrane segment spans residues 68 to 88; the sequence is YFLFSLACADLIIGAFSMNLY. At 89 to 105 the chain is on the extracellular side; it reads TLYIIKGYWPLGAVVCD. C104 and C184 form a disulfide bridge. The helical transmembrane segment at 106–127 threads the bilayer; it reads LWLALDYVVSNASVMNLLIISF. The Cytoplasmic portion of the chain corresponds to 128 to 147; it reads DRYFCVTKPLTYPARRTTKM. A helical membrane pass occupies residues 148–170; sequence AGLMIAAAWVLSFVLWAPAILFW. Over 171 to 192 the chain is Extracellular; the sequence is QFVVGKRTVPDNQCFIQFLSNP. Residues 193–215 form a helical membrane-spanning segment; it reads AVTFGTAIAAFYLPVVIMTVLYI. At 216–401 the chain is on the cytoplasmic side; the sequence is HISLASRSRV…AARERKVTRT (186 aa). The segment at 271-334 is disordered; it reads LEEAPPPALP…APTLQPRTLN (64 aa). Positions 274-285 are enriched in pro residues; sequence APPPALPPPPRP. A compositionally biased stretch (polar residues) spans 293–303; the sequence is NESSSGSATQN. Residues 310–333 show a composition bias toward low complexity; it reads TELSTTEAATTPALPAPTLQPRTL. A helical transmembrane segment spans residues 402-422; it reads IFAILLAFILTWTPYNVMVLV. Topologically, residues 423-436 are extracellular; that stretch reads NTFCQSCIPERVWS. A helical transmembrane segment spans residues 437–456; the sequence is IGYWLCYVNSTINPACYALC. Residues 457–479 lie on the Cytoplasmic side of the membrane; the sequence is NATFKKTFRHLLLCQYRNIGTAR. A phosphothreonine mark is found at T459, T463, and T477.

The protein belongs to the G-protein coupled receptor 1 family. Muscarinic acetylcholine receptor subfamily. CHRM4 sub-subfamily.

The protein resides in the cell membrane. Its subcellular location is the postsynaptic cell membrane. Its function is as follows. The muscarinic acetylcholine receptor mediates various cellular responses, including inhibition of adenylate cyclase, breakdown of phosphoinositides and modulation of potassium channels through the action of G proteins. Primary transducing effect is inhibition of adenylate cyclase. The polypeptide is Muscarinic acetylcholine receptor M4 (Chrm4) (Mus musculus (Mouse)).